A 101-amino-acid polypeptide reads, in one-letter code: DNA-binding protein Fis (101 aa).

Residues 77–96 constitute a DNA-binding region (H-T-H motif); the sequence is QTRAANMLGINRGTLRKKLK.

It belongs to the transcriptional regulatory Fis family. As to quaternary structure, homodimer.

Activates ribosomal RNA transcription. Plays a direct role in upstream activation of rRNA promoters. This Shewanella halifaxensis (strain HAW-EB4) protein is DNA-binding protein Fis.